Here is a 200-residue protein sequence, read N- to C-terminus: MQMQAARPRVGVRPRGGIRPFPLPTLSFNNNSNRSACACACAVSVSDSELAARGFAVRRSSTGLDVGALNEVFARVGFPRRQEERLRRALEHSEVVWLEDSASSSAGRPVAFARAAGDGVFNAVVWDVVVEPSCQGLGLGRAVMERLVADLRGKGVSNIALYAEPRVVGFYRLLGFAMDPDAIRGMAFYRSRQQIQNTSS.

Residues 1-41 (MQMQAARPRVGVRPRGGIRPFPLPTLSFNNNSNRSACACAC) constitute a chloroplast transit peptide. An N-acetyltransferase domain is found at 55 to 195 (FAVRRSSTGL…MAFYRSRQQI (141 aa)).

Its subcellular location is the cytoplasm. The protein resides in the plastid. It localises to the chloroplast. It catalyses the reaction serotonin + acetyl-CoA = N-acetylserotonin + CoA + H(+). The catalysed reaction is tyramine + acetyl-CoA = N-acetyltyramine + CoA + H(+). It carries out the reaction tryptamine + acetyl-CoA = N-acetyltryptamine + CoA + H(+). The enzyme catalyses 5-methoxytryptamine + acetyl-CoA = melatonin + CoA + H(+). It participates in aromatic compound metabolism; melatonin biosynthesis; melatonin from serotonin: step 1/2. Functionally, catalyzes the N-acetylation of serotonin into N-acetylserotonin, the penultimate step in the synthesis of melatonin. Catalyzes in vitro the N-acetylation of tryptamine to produce N-acetyltryptamine, 5-methoxytryptamine to produce melatonin and tyramine to produce N-acetyltyramine. The sequence is that of Serotonin N-acetyltransferase 2, chloroplastic from Oryza sativa subsp. japonica (Rice).